We begin with the raw amino-acid sequence, 199 residues long: Secreted chorismate mutase (199 aa).

The first 33 residues, 1–33, serve as a signal peptide directing secretion; it reads MLTRPREIYLATAVSIGILLSLIAPLGPPLARA. In terms of domain architecture, Chorismate mutase spans 34–113; it reads DGTSQLAELV…ATEAIEYSRF (80 aa). Residues arginine 49, lysine 60, aspartate 69, 72–76, 105–109, and arginine 134 contribute to the substrate site; these read RVEQQ and TEAIE. The cysteines at positions 160 and 193 are disulfide-linked.

Homodimer.

The protein localises to the secreted. It catalyses the reaction chorismate = prephenate. It participates in metabolic intermediate biosynthesis; prephenate biosynthesis; prephenate from chorismate: step 1/1. Tyrosine, phenylalanine, and tryptophan moderately enhance chorismate mutase activity at low concentrations, but allosterically inhibit the enzyme at higher concentrations. Its function is as follows. Catalyzes the Claisen rearrangement of chorismate to prephenate. May play some role in the pathogenicity. This is Secreted chorismate mutase from Mycobacterium tuberculosis (strain ATCC 25618 / H37Rv).